Reading from the N-terminus, the 458-residue chain is Na(+)/H(+) antiporter NhaA (458 aa).

The next 12 helical transmembrane spans lie at 27–47, 78–98, 114–134, 143–163, 172–192, 201–221, 222–242, 249–269, 316–336, 346–366, 388–408, and 421–441; these read FLHV…AALI, LHFW…GMEI, ILPI…YLSF, GWAV…ALLG, VILL…IAFF, GLAI…IGLA, SAWL…ITGV, VILG…PLTI, PWVA…VSFA, FLVV…GIIT, ILLI…VSML, and IGVL…GLIY.

Belongs to the NhaA Na(+)/H(+) (TC 2.A.33) antiporter family.

It is found in the cell inner membrane. It catalyses the reaction Na(+)(in) + 2 H(+)(out) = Na(+)(out) + 2 H(+)(in). Na(+)/H(+) antiporter that extrudes sodium in exchange for external protons. In Bartonella quintana (strain Toulouse) (Rochalimaea quintana), this protein is Na(+)/H(+) antiporter NhaA.